The sequence spans 86 residues: Exodeoxyribonuclease 7 small subunit (86 aa).

Residues 1-26 form a disordered region; that stretch reads MQDELFETEKAPQKNAKNAKNAPKKS.

It belongs to the XseB family. Heterooligomer composed of large and small subunits.

It is found in the cytoplasm. It carries out the reaction Exonucleolytic cleavage in either 5'- to 3'- or 3'- to 5'-direction to yield nucleoside 5'-phosphates.. Functionally, bidirectionally degrades single-stranded DNA into large acid-insoluble oligonucleotides, which are then degraded further into small acid-soluble oligonucleotides. The sequence is that of Exodeoxyribonuclease 7 small subunit from Helicobacter pylori (strain J99 / ATCC 700824) (Campylobacter pylori J99).